Consider the following 155-residue polypeptide: Gas vesicle protein K (155 aa).

The protein belongs to the gas vesicle GvpK family.

The protein localises to the gas vesicle. Functionally, might be involved in nucleating gas vesicle formation. Gas vesicles (GV) are hollow, gas filled proteinaceous nanostructures. During planktonic growth they allow positioning of the organism at a favorable depth for light or nutrient acquisition. Cluster expression in E.coli (gvpA1-gvpA2-gvpC-gvpN-gvpJ-gvpK-gvpF-gvpG-gvpV-gvpW) allows cells to float and produces irregularly shaped gas vesicles. The chain is Gas vesicle protein K from Nostoc sp. (strain PCC 7120 / SAG 25.82 / UTEX 2576).